The sequence spans 420 residues: 3-phosphoshikimate 1-carboxyvinyltransferase (420 aa).

Residues 1–24 form a disordered region; sequence MTRTAKLTIIPPGRPLSGRAMPPG. Residues K26, S27, and R31 each coordinate 3-phosphoshikimate. K26 contacts phosphoenolpyruvate. The phosphoenolpyruvate site is built by G97 and R125. 6 residues coordinate 3-phosphoshikimate: S170, S171, Q172, D297, N320, and K324. Q172 contacts phosphoenolpyruvate. The Proton acceptor role is filled by D297. Phosphoenolpyruvate-binding residues include R328, R375, and K400.

The protein belongs to the EPSP synthase family. Monomer.

Its subcellular location is the cytoplasm. The catalysed reaction is 3-phosphoshikimate + phosphoenolpyruvate = 5-O-(1-carboxyvinyl)-3-phosphoshikimate + phosphate. It functions in the pathway metabolic intermediate biosynthesis; chorismate biosynthesis; chorismate from D-erythrose 4-phosphate and phosphoenolpyruvate: step 6/7. In terms of biological role, catalyzes the transfer of the enolpyruvyl moiety of phosphoenolpyruvate (PEP) to the 5-hydroxyl of shikimate-3-phosphate (S3P) to produce enolpyruvyl shikimate-3-phosphate and inorganic phosphate. The polypeptide is 3-phosphoshikimate 1-carboxyvinyltransferase (Rhizobium etli (strain CIAT 652)).